Consider the following 994-residue polypeptide: Bifunctional glutamine synthetase adenylyltransferase/adenylyl-removing enzyme (994 aa).

Positions 1–487 are adenylyl removase; it reads MVVTKLATQR…LHTKLFYQPL (487 aa). Residues 492–994 are adenylyl transferase; it reads GPTGLEIAHG…KAVVRKVFGS (503 aa).

The protein belongs to the GlnE family. Mg(2+) is required as a cofactor.

The enzyme catalyses [glutamine synthetase]-O(4)-(5'-adenylyl)-L-tyrosine + phosphate = [glutamine synthetase]-L-tyrosine + ADP. It catalyses the reaction [glutamine synthetase]-L-tyrosine + ATP = [glutamine synthetase]-O(4)-(5'-adenylyl)-L-tyrosine + diphosphate. Its function is as follows. Involved in the regulation of glutamine synthetase GlnA, a key enzyme in the process to assimilate ammonia. When cellular nitrogen levels are high, the C-terminal adenylyl transferase (AT) inactivates GlnA by covalent transfer of an adenylyl group from ATP to specific tyrosine residue of GlnA, thus reducing its activity. Conversely, when nitrogen levels are low, the N-terminal adenylyl removase (AR) activates GlnA by removing the adenylyl group by phosphorolysis, increasing its activity. The regulatory region of GlnE binds the signal transduction protein PII (GlnB) which indicates the nitrogen status of the cell. This Mycobacterium tuberculosis (strain CDC 1551 / Oshkosh) protein is Bifunctional glutamine synthetase adenylyltransferase/adenylyl-removing enzyme.